Here is a 78-residue protein sequence, read N- to C-terminus: High temperature lethal protein 1 (78 aa).

N-acetylserine is present on Ser-2.

As to quaternary structure, interacts directly with RSC8. Component of the two forms of the RSC complex composed of at least either RSC1 or RSC2, and ARP7, ARP9, LDB7, NPL6, RSC3, RSC30, RSC4, RSC58, RSC6, RSC8, RSC9, SFH1, STH1, HTL1 and probably RTT102. The complexes interact with histone and histone variant components of centromeric chromatin. Component of a fungal-specific module (HTL1-LDB7-NPL6-RSC3-RSC30) within the RSC complex.

It localises to the nucleus. Required for cell cycle progression through G2/M transition at temperatures higher than 33 degrees Celsius. Component of the chromatin structure-remodeling complex (RSC), which is involved in transcription regulation and nucleosome positioning. RSC is responsible for the transfer of a histone octamer from a nucleosome core particle to naked DNA. The reaction requires ATP and involves an activated RSC-nucleosome intermediate. Remodeling reaction also involves DNA translocation, DNA twist and conformational change. As a reconfigurer of centromeric and flanking nucleosomes, RSC complex is required both for proper kinetochore function in chromosome segregation and, via a PKC1-dependent signaling pathway, for organization of the cellular cytoskeleton. When associated with the RSC complex, may act coordinately with PKC1 to regulate G2/M transition. Together with LDB7, NPL6, RSC3, RSC30 components, defines a fungal-specific module within the RSC complex that plays a role in many cellular functions including the maintenance of cell wall integrity. This is High temperature lethal protein 1 (HTL1) from Saccharomyces cerevisiae (strain ATCC 204508 / S288c) (Baker's yeast).